The chain runs to 269 residues: Probable ribosomal RNA small subunit methyltransferase A (269 aa).

Residues H19, L21, G46, E67, D92, and N107 each contribute to the S-adenosyl-L-methionine site.

This sequence belongs to the class I-like SAM-binding methyltransferase superfamily. rRNA adenine N(6)-methyltransferase family. RsmA subfamily.

The protein localises to the cytoplasm. Its function is as follows. Specifically dimethylates two adjacent adenosines in the loop of a conserved hairpin near the 3'-end of 16S rRNA in the 30S particle. May play a critical role in biogenesis of 30S subunits. This is Probable ribosomal RNA small subunit methyltransferase A from Methanosarcina acetivorans (strain ATCC 35395 / DSM 2834 / JCM 12185 / C2A).